The sequence spans 350 residues: MSKRKLTQNQQRRIQSNNAKTLHRHQHRHKSDIDWQDDMLGDFQDGTVVTRYAVHADVENEQGEIIRCNLRRTLKSVVVGDRVVWRKGKEQLQGVRGVIEAVQPRHNQIVRPDYYDGLKPIAANIDRIIIVSAVLPNLSLNIIDRYLVVCESSNIPAVIVVNKADLLSSEARIEVGLQLEIYRKIGYETLLISAKSGENMEKLTALLSEGTSIFVGQSGVGKSSLINYILPEVNAQTGKLSQVSGLGQHTTTSSRLYHLSQGGNLIDSPGIREFGLWHLDREQITNGYREFQYFLGTCKFRDCKHLHDPGCAIQLAVKEGKIDPLRFENYHRLITSLSETKSQRHFISAN.

The tract at residues methionine 1–lysine 30 is disordered. Over residues threonine 7–lysine 20 the composition is skewed to polar residues. The span at threonine 21–lysine 30 shows a compositional bias: basic residues. Positions histidine 106 to phenylalanine 274 constitute a CP-type G domain. Residues asparagine 162–aspartate 165 and glycine 216–serine 224 each bind GTP. Cysteine 298, cysteine 303, histidine 305, and cysteine 311 together coordinate Zn(2+).

Belongs to the TRAFAC class YlqF/YawG GTPase family. RsgA subfamily. In terms of assembly, monomer. Associates with 30S ribosomal subunit, binds 16S rRNA. Requires Zn(2+) as cofactor.

It localises to the cytoplasm. Functionally, one of several proteins that assist in the late maturation steps of the functional core of the 30S ribosomal subunit. Helps release RbfA from mature subunits. May play a role in the assembly of ribosomal proteins into the subunit. Circularly permuted GTPase that catalyzes slow GTP hydrolysis, GTPase activity is stimulated by the 30S ribosomal subunit. This Histophilus somni (strain 2336) (Haemophilus somnus) protein is Small ribosomal subunit biogenesis GTPase RsgA.